Here is a 103-residue protein sequence, read N- to C-terminus: Large ribosomal subunit protein bL21 (103 aa).

Belongs to the bacterial ribosomal protein bL21 family. Part of the 50S ribosomal subunit. Contacts protein L20.

Its function is as follows. This protein binds to 23S rRNA in the presence of protein L20. This is Large ribosomal subunit protein bL21 from Shewanella putrefaciens (strain CN-32 / ATCC BAA-453).